A 135-amino-acid polypeptide reads, in one-letter code: Transcriptional activator protein (135 aa).

A Nuclear localization signal motif is present at residues 17 to 32 (KIQHHIAKKRQVRRRR). A zinc finger spans residues 37-54 (CGCSYYIHLDCINHGFTH). Positions 120-135 (HLDDLTVSDWSFFKSL) are transactivation.

It belongs to the geminiviridae transcriptional activator protein family. In terms of assembly, monomer. Homodimer. Homooligomer. Self-interaction correlates with nuclear localization and efficient activation of transcription. Monomers suppress local silencing by interacting with and inactivating host adenosine kinase 2 (ADK2) in the cytoplasm. Interacts with and inhibits host SNF1 kinase. Binds to ssDNA. May interact with host RPS27A. Post-translationally, phosphorylated.

It localises to the host nucleus. It is found in the host cytoplasm. Multifunctional protein that modulates host antiviral defenses and promotes host attractiveness to insect vectors. Acts as a suppressor of RNA-mediated gene silencing, also known as post-transcriptional gene silencing (PTGS), a mechanism of plant viral defense that limits the accumulation of viral RNAs. TrAP suppresses the host RNA silencing by inhibiting adenosine kinase 2 (ADK2), a kinase involved in a general methylation pathway. Also suppresses the host basal defense by interacting with and inhibiting SNF1 kinase, a key regulator of cell metabolism implicated in innate antiviral defense. Functionally, inhibits signal transduction by the phytohormone jasmonate, making the infected plant more attractive to aphids, which are the second host to play a role as a dissemination vector. Acts by binding to ubiquitin precursor RPS27A, thereby preventing ubiquitin degradation of JAZ. This is Transcriptional activator protein from Tomato yellow leaf curl Sardinia virus (isolate Spain-1) (TYLCSV).